Consider the following 130-residue polypeptide: Ribosome-binding factor A (130 aa).

The disordered stretch occupies residues 111 to 130 (RDLDDVGPGATSSDEDAEQR).

This sequence belongs to the RbfA family. Monomer. Binds 30S ribosomal subunits, but not 50S ribosomal subunits or 70S ribosomes.

It localises to the cytoplasm. One of several proteins that assist in the late maturation steps of the functional core of the 30S ribosomal subunit. Associates with free 30S ribosomal subunits (but not with 30S subunits that are part of 70S ribosomes or polysomes). Required for efficient processing of 16S rRNA. May interact with the 5'-terminal helix region of 16S rRNA. This chain is Ribosome-binding factor A, found in Xanthomonas oryzae pv. oryzae (strain MAFF 311018).